Reading from the N-terminus, the 341-residue chain is Paired box protein Pax-9 (341 aa).

A DNA-binding region (paired) is located at residues 4–130 (AFGEVNQLGG…SSISRILRNK (127 aa)). The interval 7 to 63 (EVNQLGGVFVNGRPLPNAIRLRIVELAQLGIRPCDISRQLRVSHGCVSKILARYNET) is PAI subdomain. The RED subdomain stretch occupies residues 82 to 130 (TVVKHIRTYKQRDPGIFAWEIRDRLLADGVCDKYNVPSVSSISRILRNK). An interaction with KDM5B region spans residues 168–189 (AAAAKVPTPPGVPAIPGSVAMP).

As to quaternary structure, interacts with KDM5B.

The protein resides in the nucleus. Its function is as follows. Transcription factor required for normal development of thymus, parathyroid glands, ultimobranchial bodies, teeth, skeletal elements of skull and larynx as well as distal limbs. In Macaca mulatta (Rhesus macaque), this protein is Paired box protein Pax-9 (PAX9).